A 465-amino-acid polypeptide reads, in one-letter code: UDP-N-acetylmuramate--L-alanine ligase (465 aa).

112–118 (GTHGKTT) contributes to the ATP binding site.

The protein belongs to the MurCDEF family.

It is found in the cytoplasm. It catalyses the reaction UDP-N-acetyl-alpha-D-muramate + L-alanine + ATP = UDP-N-acetyl-alpha-D-muramoyl-L-alanine + ADP + phosphate + H(+). It participates in cell wall biogenesis; peptidoglycan biosynthesis. Cell wall formation. The sequence is that of UDP-N-acetylmuramate--L-alanine ligase from Burkholderia lata (strain ATCC 17760 / DSM 23089 / LMG 22485 / NCIMB 9086 / R18194 / 383).